A 771-amino-acid chain; its full sequence is Solute carrier family 7 member 14 (771 aa).

Helical transmembrane passes span Leu58–Val78, Ala83–Val103, Ala119–Leu141, Tyr187–Val207, Val216–Ile236, and Trp251–Ile271. A glycan (N-linked (GlcNAc...) asparagine) is linked at Asn282. 4 helical membrane-spanning segments follow: residues Ala291–Val311, Phe336–Pro356, Pro384–Leu404, and Leu407–Leu427. Ser465, Ser468, Ser475, and Ser488 each carry phosphoserine. The next 4 membrane-spanning stretches (helical) occupy residues Val565–Phe585, Trp596–Leu616, Met628–Leu648, and Trp655–Trp675. An N-linked (GlcNAc...) asparagine glycan is attached at Asn676. Positions Ser735–Glu771 are disordered. The span at Ser745 to Lys754 shows a compositional bias: basic residues. Residues Ser757 and Ser769 each carry the phosphoserine modification.

It belongs to the amino acid-polyamine-organocation (APC) superfamily. As to expression, expressed in retina, brain and spinal cord. In the retina, expressed in the inner nuclear layer and photoreceptor layer (at protein level). Expressed in liver, spleen, lung, kidney intestine and brain (at protein level).

Its subcellular location is the lysosome membrane. The catalysed reaction is 4-aminobutanoate(in) = 4-aminobutanoate(out). Imports 4-aminobutanoate (GABA) into lysosomes. May act as a GABA sensor that regulates mTORC2-dependent INS signaling and gluconeogenesis. The transport mechanism and substrate selectivity remain to be elucidated. This Mus musculus (Mouse) protein is Solute carrier family 7 member 14.